We begin with the raw amino-acid sequence, 1669 residues long: Collagen alpha-3(IV) chain (1669 aa).

An N-terminal signal peptide occupies residues 1–28 (MHSKTAPRFLVFLLLTLLLLLAASPVAS). The segment at 29–42 (KGCVCKGKGQCLCA) is 7S domain. Residues 43–1436 (GTKGEKGEKG…KGNPGDRGTP (1394 aa)) are triple-helical region. Disordered regions lie at residues 44 to 473 (TKGE…EPGS) and 500 to 1439 (PGGR…PATG). The span at 54–68 (PGSPGFPGQKGFPGP) shows a compositional bias: low complexity. The span at 105–114 (PGLPGLPGHP) shows a compositional bias: pro residues. Asparagine 126 is a glycosylation site (N-linked (GlcNAc...) asparagine). Pro residues predominate over residues 188–200 (PGFPGPAGPPGPP). Residues 202 to 211 (FFGLPGAMGP) show a composition bias toward low complexity. An N-linked (GlcNAc...) asparagine glycan is attached at asparagine 253. Residues 255–269 (SDFKGEKGDEGERGE) are compositionally biased toward basic and acidic residues. Low complexity-rich tracts occupy residues 279–290 (PGDSYGSEKGAP) and 382–393 (SPGLSRPGLRGP). The segment covering 416–437 (PPGPLGCPGSPGPPGPPGPPGC) has biased composition (pro residues). The span at 551–560 (NPGDPGLRGL) shows a compositional bias: low complexity. Pro residues-rich tracts occupy residues 596–617 (PPGPPGFPGPPGPAGPAGPPGY) and 654–665 (LGPPGPPGPPGQ). The span at 666–684 (AGPRGLPGLPGPVGKCDPG) shows a compositional bias: low complexity. The span at 778–787 (GTPGRGGLDG) shows a compositional bias: gly residues. A Cell attachment site motif is present at residues 830-832 (RGD). The span at 861–876 (CPGEMGPPGQKGYPGA) shows a compositional bias: low complexity. Over residues 922–939 (KGEKGRPGAKGERGEKGK) the composition is skewed to basic and acidic residues. Positions 970 to 985 (RGNPGLPGPKGLEGLP) are enriched in low complexity. A Cell attachment site motif is present at residues 994-996 (RGD). Residues 1092-1103 (SGPAGPDGAPGS) show a composition bias toward low complexity. The segment covering 1128-1146 (PGPPGSTGPPGPPGLPGLP) has biased composition (pro residues). Positions 1152 to 1154 (RGD) match the Cell attachment site motif. Positions 1228–1248 (PGAIIPGPKGDRGLPGLRGNP) are enriched in low complexity. Pro residues predominate over residues 1250-1259 (EPGPPGPPGP). The short motif at 1304 to 1306 (RGD) is the Cell attachment site element. Pro residues predominate over residues 1333–1343 (PVGPKGPPGPR). Composition is skewed to low complexity over residues 1366–1379 (QPGMKGDPGPLGLP) and 1402–1429 (PAGTKGNKGLKGQQGPPGLDGLPGLKGN). Residues 1425-1443 (GLKGNPGDRGTPATGTRMR) form an epitope recognized by Goodpasture antibodies region. Residues 1444–1668 (GFIFTRHSQT…SRCQVCMKKR (225 aa)) form the Collagen IV NC1 domain. Disulfide bonds link cysteine 1459–cysteine 1550, cysteine 1492–cysteine 1547, cysteine 1504–cysteine 1510, cysteine 1569–cysteine 1664, cysteine 1603–cysteine 1661, and cysteine 1615–cysteine 1621. The interval 1478–1556 (NKRAHGQDLG…CTVCEGPAMA (79 aa)) is required for the anti-angiogenic activity of tumstatin. Methionine 1532 is covalently cross-linked (S-Lysyl-methionine sulfilimine (Met-Lys) (interchain with K-1650)). A required for the anti-tumor cell activity of tumstatin region spans residues 1609-1627 (ASPFIECHGRGTCNYYSNS). Lysine 1650 is covalently cross-linked (S-Lysyl-methionine sulfilimine (Lys-Met) (interchain with M-1532)).

It belongs to the type IV collagen family. In terms of assembly, there are six type IV collagen isoforms, alpha 1(IV)-alpha 6(IV), each of which can form a triple helix structure with 2 other chains to generate type IV collagen network. The alpha 3(IV) chain forms a triple helical protomer with alpha 4(IV) and alpha 5(IV); this triple helical structure dimerizes through NC1-NC1 domain interactions such that the alpha 3(IV), alpha 4(IV) and alpha 5(IV) chains of one protomer connect with the alpha 5(IV), alpha 4(IV) and alpha 3(IV) chains of the opposite promoter, respectively. Interacts with ITGB3. Associates with LAMB2 at the neuromuscular junction and in GBM. In terms of processing, prolines at the third position of the tripeptide repeating unit (G-X-Y) are hydroxylated in some or all of the chains. Post-translationally, type IV collagens contain numerous cysteine residues which are involved in inter- and intramolecular disulfide bonding. 12 of these, located in the NC1 domain, are conserved in all known type IV collagens. The trimeric structure of the NC1 domains is stabilized by covalent bonds between Lys and Met residues. In terms of processing, phosphorylated. Thought to be phosphorylated by CERT, but CERT does not have kinase activity. Highly expressed in kidney and lung. Detected at lower levels in heart, muscle and skin.

The protein localises to the secreted. The protein resides in the extracellular space. It is found in the extracellular matrix. Its subcellular location is the basement membrane. Type IV collagen is the major structural component of glomerular basement membranes (GBM), forming a 'chicken-wire' meshwork together with laminins, proteoglycans and entactin/nidogen. Functionally, tumstatin, a cleavage fragment corresponding to the collagen alpha 3(IV) NC1 domain, possesses both anti-angiogenic and anti-tumor cell activity; these two anti-tumor properties may be regulated via RGD-independent ITGB3-mediated mechanisms. The polypeptide is Collagen alpha-3(IV) chain (Mus musculus (Mouse)).